We begin with the raw amino-acid sequence, 116 residues long: MTNKIIQMLEAEQMNKEIPTFAPGDTVVVQVKVKEGDRQRLQAFEGVVIAKRNRGLNSAFTVRKISSGVGVERTFQTYSPLVDSLSVKRRGDVRKAKLYYLRDLSGKAARIKEKLS.

Belongs to the bacterial ribosomal protein bL19 family.

In terms of biological role, this protein is located at the 30S-50S ribosomal subunit interface and may play a role in the structure and function of the aminoacyl-tRNA binding site. The sequence is that of Large ribosomal subunit protein bL19 from Ectopseudomonas mendocina (strain ymp) (Pseudomonas mendocina).